The chain runs to 478 residues: Ribulose bisphosphate carboxylase large chain (478 aa).

Positions 1 to 2 (MS) are excised as a propeptide. 2 residues coordinate substrate: asparagine 123 and threonine 173. Catalysis depends on lysine 175, which acts as the Proton acceptor. Position 177 (lysine 177) interacts with substrate. Residues lysine 201, aspartate 203, and glutamate 204 each contribute to the Mg(2+) site. Lysine 201 carries the post-translational modification N6-carboxylysine. Phosphoserine is present on serine 208. The active-site Proton acceptor is histidine 294. Substrate-binding residues include arginine 295 and histidine 327. Threonine 330 carries the post-translational modification Phosphothreonine. Serine 379 lines the substrate pocket.

This sequence belongs to the RuBisCO large chain family. Type I subfamily. In terms of assembly, heterohexadecamer of 8 large chains and 8 small chains; disulfide-linked. The disulfide link is formed within the large subunit homodimers. Mg(2+) is required as a cofactor. The disulfide bond which can form in the large chain dimeric partners within the hexadecamer appears to be associated with oxidative stress and protein turnover.

It is found in the plastid. The protein localises to the chloroplast. The catalysed reaction is 2 (2R)-3-phosphoglycerate + 2 H(+) = D-ribulose 1,5-bisphosphate + CO2 + H2O. It catalyses the reaction D-ribulose 1,5-bisphosphate + O2 = 2-phosphoglycolate + (2R)-3-phosphoglycerate + 2 H(+). Its function is as follows. RuBisCO catalyzes two reactions: the carboxylation of D-ribulose 1,5-bisphosphate, the primary event in carbon dioxide fixation, as well as the oxidative fragmentation of the pentose substrate in the photorespiration process. Both reactions occur simultaneously and in competition at the same active site. The chain is Ribulose bisphosphate carboxylase large chain from Lepidium virginicum (Virginia pepperweed).